Here is a 739-residue protein sequence, read N- to C-terminus: Phosphoribosylformylglycinamidine synthase subunit PurL (739 aa).

Residue H52 is part of the active site. ATP-binding residues include Y55 and K94. E96 lines the Mg(2+) pocket. Substrate-binding positions include 97–100 (SHNH) and R119. Residue H98 is the Proton acceptor of the active site. D120 is a binding site for Mg(2+). Q243 is a binding site for substrate. D273 is a binding site for Mg(2+). 317–319 (ESQ) serves as a coordination point for substrate. The ATP site is built by D500 and G537. Position 538 (N538) interacts with Mg(2+). S540 serves as a coordination point for substrate.

The protein belongs to the FGAMS family. In terms of assembly, monomer. Part of the FGAM synthase complex composed of 1 PurL, 1 PurQ and 2 PurS subunits.

It localises to the cytoplasm. The enzyme catalyses N(2)-formyl-N(1)-(5-phospho-beta-D-ribosyl)glycinamide + L-glutamine + ATP + H2O = 2-formamido-N(1)-(5-O-phospho-beta-D-ribosyl)acetamidine + L-glutamate + ADP + phosphate + H(+). It functions in the pathway purine metabolism; IMP biosynthesis via de novo pathway; 5-amino-1-(5-phospho-D-ribosyl)imidazole from N(2)-formyl-N(1)-(5-phospho-D-ribosyl)glycinamide: step 1/2. Part of the phosphoribosylformylglycinamidine synthase complex involved in the purines biosynthetic pathway. Catalyzes the ATP-dependent conversion of formylglycinamide ribonucleotide (FGAR) and glutamine to yield formylglycinamidine ribonucleotide (FGAM) and glutamate. The FGAM synthase complex is composed of three subunits. PurQ produces an ammonia molecule by converting glutamine to glutamate. PurL transfers the ammonia molecule to FGAR to form FGAM in an ATP-dependent manner. PurS interacts with PurQ and PurL and is thought to assist in the transfer of the ammonia molecule from PurQ to PurL. The polypeptide is Phosphoribosylformylglycinamidine synthase subunit PurL (Enterococcus faecalis (strain ATCC 700802 / V583)).